We begin with the raw amino-acid sequence, 484 residues long: tRNA sulfurtransferase (484 aa).

Positions 63-167 (ELFAERLAHI…RDKLYMVSQR (105 aa)) constitute a THUMP domain. ATP is bound by residues 185-186 (LI), lysine 267, glycine 289, and glutamine 298. The cysteines at positions 346 and 458 are disulfide-linked. Residues 406–484 (AAGNEVIIDI…GYNNVKVYRP (79 aa)) form the Rhodanese domain. The active-site Cysteine persulfide intermediate is the cysteine 458.

Belongs to the ThiI family.

It is found in the cytoplasm. It catalyses the reaction [ThiI sulfur-carrier protein]-S-sulfanyl-L-cysteine + a uridine in tRNA + 2 reduced [2Fe-2S]-[ferredoxin] + ATP + H(+) = [ThiI sulfur-carrier protein]-L-cysteine + a 4-thiouridine in tRNA + 2 oxidized [2Fe-2S]-[ferredoxin] + AMP + diphosphate. The enzyme catalyses [ThiS sulfur-carrier protein]-C-terminal Gly-Gly-AMP + S-sulfanyl-L-cysteinyl-[cysteine desulfurase] + AH2 = [ThiS sulfur-carrier protein]-C-terminal-Gly-aminoethanethioate + L-cysteinyl-[cysteine desulfurase] + A + AMP + 2 H(+). It participates in cofactor biosynthesis; thiamine diphosphate biosynthesis. In terms of biological role, catalyzes the ATP-dependent transfer of a sulfur to tRNA to produce 4-thiouridine in position 8 of tRNAs, which functions as a near-UV photosensor. Also catalyzes the transfer of sulfur to the sulfur carrier protein ThiS, forming ThiS-thiocarboxylate. This is a step in the synthesis of thiazole, in the thiamine biosynthesis pathway. The sulfur is donated as persulfide by IscS. The protein is tRNA sulfurtransferase of Shewanella amazonensis (strain ATCC BAA-1098 / SB2B).